Here is a 487-residue protein sequence, read N- to C-terminus: Betaine aldehyde dehydrogenase (487 aa).

2 residues coordinate K(+): Ser-26 and Asp-93. Gly-150–Trp-152 lines the NAD(+) pocket. Lys-162 acts as the Charge relay system in catalysis. Residues Lys-176 to Glu-179 and Ser-229 to Thr-232 contribute to the NAD(+) site. K(+) is bound at residue Leu-244. The Proton acceptor role is filled by Glu-250. The NAD(+) site is built by Gly-252, Cys-284, and Glu-384. Cys-284 (nucleophile) is an active-site residue. Residue Cys-284 is modified to Cysteine sulfenic acid (-SOH). The K(+) site is built by Lys-454 and Gly-457. Residue Glu-461 is the Charge relay system of the active site.

The protein belongs to the aldehyde dehydrogenase family. In terms of assembly, dimer of dimers. The cofactor is K(+).

It catalyses the reaction betaine aldehyde + NAD(+) + H2O = glycine betaine + NADH + 2 H(+). Its pathway is amine and polyamine biosynthesis; betaine biosynthesis via choline pathway; betaine from betaine aldehyde: step 1/1. Its function is as follows. Involved in the biosynthesis of the osmoprotectant glycine betaine. Catalyzes the irreversible oxidation of betaine aldehyde to the corresponding acid. The protein is Betaine aldehyde dehydrogenase of Rhizobium leguminosarum bv. trifolii (strain WSM2304).